The primary structure comprises 286 residues: uncharacterized protein (286 aa).

Disordered regions lie at residues 59 to 89 and 225 to 286; these read PESA…PGAK and RQRK…EDTR. Positions 69–85 are enriched in low complexity; that stretch reads AEAESAGTAAATESHGA.

This is an uncharacterized protein from Mus musculus (Mouse).